The primary structure comprises 494 residues: Catalase (494 aa).

Active-site residues include His65 and Asn138. Residue Tyr348 coordinates heme.

Belongs to the catalase family. As to quaternary structure, homotetramer. The cofactor is heme.

The protein localises to the cytoplasm. It localises to the cytosol. Its subcellular location is the peroxisome matrix. It carries out the reaction 2 H2O2 = O2 + 2 H2O. Catalyzes the degradation of hydrogen peroxide (H(2)O(2)) generated by peroxisomal oxidases to water and oxygen, thereby protecting cells from the toxic effects of hydrogen peroxide. In Pisum sativum (Garden pea), this protein is Catalase.